We begin with the raw amino-acid sequence, 415 residues long: SNF1 protein kinase subunit beta-2 (415 aa).

Disordered stretches follow at residues 1–43 (MGTT…EMDA), 55–158 (KCSD…PSEI), and 249–276 (EKNP…SSIA). G2 carries the N-myristoyl glycine lipid modification. The segment covering 9 to 19 (AQKKQTTKKCR) has biased composition (basic residues). The span at 55 to 69 (KCSDSQDAGQPSREG) shows a compositional bias: polar residues. S66 is subject to Phosphoserine. Composition is skewed to basic and acidic residues over residues 122-150 (PKQD…RAKE) and 249-264 (EKNP…EADS). The interval 154–335 (GPSEIKSSLM…LDRQQSNTDT (182 aa)) is kinase-interacting sequence (KIS); required for interaction with SNF1. The residue at position 298 (S298) is a Phosphoserine. Residues 336–415 (SWLTPPQLPP…QILYTPIESS (80 aa)) are association with SNF1 kinase complex (ASC) domain; required for interaction with SNF4.

This sequence belongs to the 5'-AMP-activated protein kinase beta subunit family. Component of the SNF1 kinase complex, a heterotrimeric complex composed of the catalytic alpha subunit SNF1, one of the three related beta subunits SIP1, SIP2 or GAL83, and the regulatory gamma subunit SNF4. The beta subunit serves as a bridge between the catalytic and the regulatory subunit. Interacts (via KIS domain) with SNF1. Interacts (via ASC domain) with SNF4. Post-translationally, phosphorylated by SNF1 in vitro.

It is found in the cytoplasm. It localises to the cell membrane. Functionally, beta subunit of the SNF1 kinase complex, which is required for transcriptional, metabolic, and developmental adaptations in response to glucose limitation. Has a structural role, mediating heterotrimer formation, and a regulatory role, defining carbon source-regulated subcellular location and substrate specificity of the SNF1 kinase complex. Involved in the regulation of aging. Acts as a negative regulator of nuclear SNF1 activity in young cells by sequestering its activating gamma subunit at the plasma membrane. In Saccharomyces cerevisiae (strain ATCC 204508 / S288c) (Baker's yeast), this protein is SNF1 protein kinase subunit beta-2 (SIP2).